The chain runs to 156 residues: 3-dehydroquinate dehydratase (156 aa).

The active-site Proton acceptor is Tyr24. Positions 76, 82, and 89 each coordinate substrate. His102 functions as the Proton donor in the catalytic mechanism. Residues 103–104 (IS) and Arg113 each bind substrate.

This sequence belongs to the type-II 3-dehydroquinase family. In terms of assembly, homododecamer.

It catalyses the reaction 3-dehydroquinate = 3-dehydroshikimate + H2O. It functions in the pathway metabolic intermediate biosynthesis; chorismate biosynthesis; chorismate from D-erythrose 4-phosphate and phosphoenolpyruvate: step 3/7. Catalyzes a trans-dehydration via an enolate intermediate. This chain is 3-dehydroquinate dehydratase, found in Nitrobacter winogradskyi (strain ATCC 25391 / DSM 10237 / CIP 104748 / NCIMB 11846 / Nb-255).